The chain runs to 142 residues: Large ribosomal subunit protein uL11 (142 aa).

Belongs to the universal ribosomal protein uL11 family. As to quaternary structure, part of the ribosomal stalk of the 50S ribosomal subunit. Interacts with L10 and the large rRNA to form the base of the stalk. L10 forms an elongated spine to which L12 dimers bind in a sequential fashion forming a multimeric L10(L12)X complex. One or more lysine residues are methylated.

In terms of biological role, forms part of the ribosomal stalk which helps the ribosome interact with GTP-bound translation factors. This is Large ribosomal subunit protein uL11 from Shewanella sediminis (strain HAW-EB3).